The chain runs to 698 residues: Ubiquitin-like modifier-activating enzyme ATG7 (698 aa).

The FAP motif signature appears at 11–13 (FAP). K41 is covalently cross-linked (Glycyl lysine isopeptide (Lys-Gly) (interchain with G-Cter in ubiquitin)). Residue C567 is the Glycyl thioester intermediate of the active site. S693 carries the phosphoserine modification.

The protein belongs to the ATG7 family. In terms of assembly, homodimer. Interacts with ATG3; this interaction is essential for the transfer of ATG8-like proteins's thioester from ATG7 to ATG3 and plays a role in the conjugation of ATG12 to ATG5. Interacts with ATG12. Interacts with ATG10. Forms intermediate conjugates with GABARAPL1. Forms intermediate conjugates with ATG8-like proteins such as GABARAP, GABARAPL2 or MAP1LC3A. Interacts with EP300 acetyltransferase. Interacts with FOXO1. Acetylated by EP300. In terms of processing, polyubiquitinated on Lys-41 via 'Lys-63'-linked ubiquitin by TRIM32; this modification positiely regulates ATG8 and ATG12 activating enzyme activity leading to initiation of autophagy under metabolic stress. As to expression, widely expressed, especially in kidney, liver, lymph nodes and bone marrow.

It localises to the cytoplasm. The protein localises to the preautophagosomal structure. In terms of biological role, E1-like activating enzyme involved in the 2 ubiquitin-like systems required for cytoplasm to vacuole transport (Cvt) and autophagy. Activates ATG12 for its conjugation with ATG5 as well as the ATG8 family proteins for their conjugation with phosphatidylethanolamine. Both systems are needed for the ATG8 association to Cvt vesicles and autophagosomes membranes. Facilitates LC3-I lipidation with phosphatidylethanolamine to form LC3-II which is found on autophagosomal membranes. Required for autophagic death induced by caspase-8 inhibition. Required for mitophagy which contributes to regulate mitochondrial quantity and quality by eliminating the mitochondria to a basal level to fulfill cellular energy requirements and preventing excess ROS production. Modulates p53/TP53 activity to regulate cell cycle and survival during metabolic stress. Also plays a key role in the maintenance of axonal homeostasis, the prevention of axonal degeneration, the maintenance of hematopoietic stem cells, the formation of Paneth cell granules, as well as in adipose differentiation. Plays a role in regulating the liver clock and glucose metabolism by mediating the autophagic degradation of CRY1 (clock repressor) in a time-dependent manner. This chain is Ubiquitin-like modifier-activating enzyme ATG7, found in Mus musculus (Mouse).